Reading from the N-terminus, the 177-residue chain is MSRIGKKPVVIPAGVTAKVEGQAISVKGGKGELHFTAPDYVSVALEGTQIAVSPRSEDKKARAAWGMTRSIVNNLVIGVSQGFERKLEITGVGYKAAVQGKNLQLSLGYSHDISFPIPDGIAIAAPKPTEVSITGIDKQRVGQIAAEIRALRPPEPYKGKGVKYAGEFIFRKEGKKK.

It belongs to the universal ribosomal protein uL6 family. As to quaternary structure, part of the 50S ribosomal subunit.

Its function is as follows. This protein binds to the 23S rRNA, and is important in its secondary structure. It is located near the subunit interface in the base of the L7/L12 stalk, and near the tRNA binding site of the peptidyltransferase center. The protein is Large ribosomal subunit protein uL6 of Beijerinckia indica subsp. indica (strain ATCC 9039 / DSM 1715 / NCIMB 8712).